Here is a 722-residue protein sequence, read N- to C-terminus: Polyribonucleotide nucleotidyltransferase (722 aa).

Asp-487 and Asp-493 together coordinate Mg(2+). The region spanning 554-613 (PRIETFKIPTDKIREVIGTGGKVIREIVEKTGAKVNIEDDGTVKVASSDGESIKAAIKWI) is the KH domain. One can recognise an S1 motif domain in the interval 623 to 691 (GEIYEGTVVK…DRGKTRLSMK (69 aa)). The disordered stretch occupies residues 691–722 (KVVDQDTGEDLEAKQKAEAKAEDEAPAQAAGE). Positions 701-713 (LEAKQKAEAKAED) are enriched in basic and acidic residues.

Belongs to the polyribonucleotide nucleotidyltransferase family. The cofactor is Mg(2+).

It localises to the cytoplasm. The enzyme catalyses RNA(n+1) + phosphate = RNA(n) + a ribonucleoside 5'-diphosphate. Its function is as follows. Involved in mRNA degradation. Catalyzes the phosphorolysis of single-stranded polyribonucleotides processively in the 3'- to 5'-direction. This chain is Polyribonucleotide nucleotidyltransferase, found in Rhodopseudomonas palustris (strain BisB5).